Reading from the N-terminus, the 341-residue chain is LRP2-binding protein (341 aa).

One copy of the TPR repeat lies at 56 to 89 (VQANFLLGQLFFEEGWYEDALLQFEKVKDEDNQA). Sel1-like repeat units lie at residues 90-122 (LYQAGVMYYDGLGTQEDHRKGVKYMERIVTSDC), 130-165 (YAAAYNLGRAYFEGYGIPHSDKEAERWWLFAADNGN), 170-203 (LKAQSVLGMYYSSPPNVDLQKAFLWHSEACGNGS), 204-239 (LESQGALGVMYLYGNGIKKNVQAAIECLKEAAERGN), 240-271 (VYAQGHLVSCYYQRKLYTKAVELAKKIVSHDN), and 291-326 (AIATFYFARCLHLGLGIKQDSTAAKQLYSKAAQLDA).

Its subcellular location is the cytoplasm. In terms of biological role, may act as an adapter that regulates LRP2 function. This Xenopus laevis (African clawed frog) protein is LRP2-binding protein (lrp2bp).